The sequence spans 504 residues: Multicopper oxidase MmcO (504 aa).

The segment at residues 1-44 is a signal peptide (tat-type signal); sequence MPELATSGNAFDKRRFSRRGFLGAGIASGFALAACASKPTASGA. The Cu cation site is built by histidine 120, histidine 122, histidine 161, and histidine 163. The region spanning 190–349 is the Plastocyanin-like domain; the sequence is EWIIILDDWT…NALARALLST (160 aa). 7 residues coordinate Cu cation: histidine 437, histidine 440, histidine 442, histidine 485, cysteine 486, histidine 487, and histidine 491.

This sequence belongs to the multicopper oxidase family. Requires Cu cation as cofactor. Post-translationally, predicted to be exported by the Tat system. The position of the signal peptide cleavage has not been experimentally proven.

The protein localises to the cell inner membrane. It is found in the periplasm. The enzyme catalyses 4 Fe(2+) + O2 + 4 H(+) = 4 Fe(3+) + 2 H2O. Its function is as follows. Required for copper resistance. In vitro, oxidizes organic substrates and Fe(2+). May act in vivo by oxidation of toxic periplasmic Cu(+). In Mycobacterium tuberculosis (strain ATCC 25618 / H37Rv), this protein is Multicopper oxidase MmcO.